The chain runs to 297 residues: HTH-type transcriptional regulator ArgP (297 aa).

The 57-residue stretch at 4-60 folds into the HTH lysR-type domain; the sequence is PDYRTLQALDAVIRERGFERAAQKLCITQSAVSQRIKQLENMFGQPLLVRTVPPRPT. Positions 21–40 form a DNA-binding region, H-T-H motif; the sequence is FERAAQKLCITQSAVSQRIK.

It belongs to the LysR transcriptional regulatory family. As to quaternary structure, homodimer.

Controls the transcription of genes involved in arginine and lysine metabolism. The protein is HTH-type transcriptional regulator ArgP of Klebsiella pneumoniae (strain 342).